Reading from the N-terminus, the 196-residue chain is Alpha-crystallin A chain (196 aa).

N-acetylmethionine is present on Met1. The tract at residues 1-63 (MDVTIQHPWF…RTVLDSGISE (63 aa)) is required for complex formation with BFSP1 and BFSP2. The residue at position 6 (Gln6) is a Deamidated glutamine; partial. Ser45 is modified (phosphoserine). Gln50 is modified (deamidated glutamine; partial). Residues 76-185 (HAGNPKNNPG…GHSERAIPVS (110 aa)) enclose the sHSP domain. Residues Lys93 and Lys122 each carry the N6-acetyllysine modification. Residue His123 participates in Zn(2+) binding. The residue at position 124 (Asn124) is a Deamidated asparagine; partial. Positions 125 and 130 each coordinate Zn(2+). Position 145 is a phosphoserine (Ser145). Asn146 carries the deamidated asparagine; partial modification. Residues 168–196 (KVQSGLDAGHSERAIPVSREEKPSSAPSS) form a disordered region. Deamidated glutamine; partial is present on Gln170. The span at 176–190 (GHSERAIPVSREEKP) shows a compositional bias: basic and acidic residues. His177 contacts Zn(2+). Residue Ser185 is glycosylated (O-linked (GlcNAc) serine).

The protein belongs to the small heat shock protein (HSP20) family. Heteropolymer composed of three CRYAA and one CRYAB subunits. Inter-subunit bridging via zinc ions enhances stability, which is crucial as there is no protein turn over in the lens. Can also form homodimers and homotetramers (dimers of dimers) which serve as the building blocks of homooligomers. Within homooligomers, the zinc-binding motif is created from residues of 3 different molecules. His-123 and Glu-125 from one molecule are ligands of the zinc ion, and His-130 and His-177 residues from additional molecules complete the site with tetrahedral coordination geometry. Part of a complex required for lens intermediate filament formation composed of BFSP1, BFSP2 and CRYAA. In terms of processing, acetylation at Lys-93 may increase chaperone activity. Post-translationally, undergoes age-dependent proteolytical cleavage at the C-terminus. Cleavage by m-calpain produces specifically alpha-crystallin A(1-162), cleavage by Capn3/Lp82 produces specifically alpha-crystallin A(1-168) which is the major truncated form during normal maturation and induced cataract formation. Highly expressed in eye lens. Also expressed in non-lenticular tissues such as brain, spleen, liver, lung, skin, small intestine and a several epithelial and fibroblast cell lines with highest levels in spleen.

The protein resides in the cytoplasm. The protein localises to the nucleus. In terms of biological role, contributes to the transparency and refractive index of the lens. Acts as a chaperone, preventing aggregation of various proteins under a wide range of stress conditions. Required for the correct formation of lens intermediate filaments as part of a complex composed of BFSP1, BFSP2 and CRYAA. Functionally, inhibits bacterial growth in the lens. This chain is Alpha-crystallin A chain (Cryaa), found in Rattus norvegicus (Rat).